Reading from the N-terminus, the 238-residue chain is Complement C1q-like protein 4 (238 aa).

An N-terminal signal peptide occupies residues 1–15; the sequence is MVLLLLVAIPLLVHS. Positions 36–101 are disordered; sequence GPRGPGPDGA…PPGPGPGGVA (66 aa). A Collagen-like domain is found at 53 to 96; that stretch reads PPGAKGEVGRRGKAGLRGPPGPPGPRGPPGEPGRPGPPGPPGPG. Residues 71–96 show a composition bias toward pro residues; sequence PPGPPGPRGPPGEPGRPGPPGPPGPG. The C1q domain occupies 105–238; sequence GYVPRIAFYA…TFSGFIIYPD (134 aa).

In terms of assembly, forms homooligomers, predominantly dimers or trimers. Forms heterooligomers with C1QL1, C1QL2 and C1QL3, when proteins are coexpressed; this interaction does not occur after secretion. Interacts with ADGRB3. Highest expression levels in testis and adipose tissue, lower levels in skeletal muscle and kidney.

The protein localises to the secreted. In terms of biological role, may regulate the number of excitatory synapses that are formed on hippocampus neurons. Has no effect on inhibitory synapses. May inhibit adipocyte differentiation at an early stage of the process. In Homo sapiens (Human), this protein is Complement C1q-like protein 4 (C1QL4).